A 571-amino-acid chain; its full sequence is OTU domain-containing protein 5 (571 aa).

Disordered regions lie at residues 1-111 and 146-175; these read MTIL…GPGG and PGHS…GAGY. Residues 11–30 are compositionally biased toward pro residues; the sequence is PPDADPANEPPPPGPMPPAP. Over residues 32 to 47 the composition is skewed to gly residues; that stretch reads RGGGVGVGGGGTGVGG. Over residues 63 to 75 the composition is skewed to pro residues; the sequence is ASPPPQGPLPGPP. Position 64 is a phosphoserine (Ser-64). The span at 84–97 shows a compositional bias: low complexity; that stretch reads AVPPGAVAGPRPQQ. Position 165 is a phosphoserine (Ser-165). Phosphotyrosine is present on Tyr-175. Ser-177 bears the Phosphoserine mark. Thr-195 is subject to Phosphothreonine. The 129-residue stretch at 213 to 341 folds into the OTU domain; it reads FIIKQMKEDG…NIHYNSVVNP (129 aa). Residues 218–224 form a cys-loop region; sequence MKEDGAC. Asp-221 is a catalytic residue. Cys-224 functions as the Nucleophile in the catalytic mechanism. Positions 273-283 are variable-loop; the sequence is KRKNNCHGNHI. A Phosphoserine; by MTOR modification is found at Ser-328. Positions 329–334 are his-loop; that stretch reads YHRNIH. Residue His-334 is part of the active site. Residues Ser-337 and Ser-375 each carry the phosphoserine modification. The segment at 418 to 502 is disordered; that stretch reads ARQVRGPSQP…PGTSSQFSAG (85 aa). 2 stretches are compositionally biased toward low complexity: residues 430–443 and 450–462; these read ASAT…AASS and SRSP…ASSP. At Ser-452 the chain carries Phosphoserine. At Thr-507 the chain carries Phosphothreonine. Ser-508 carries the post-translational modification Phosphoserine; by MTOR.

This sequence belongs to the peptidase C85 family. In terms of assembly, interacts with TRAF3. Post-translationally, phosphorylation at Ser-177 is required for deubiquitinating activity. Phosphorylation at Ser-328, Ser-337 and Ser-508 by MTOR promotes its activity. In terms of tissue distribution, expressed in various tissues, including the liver and placenta, as well as in peripheral blood leukocytes.

It is found in the nucleus. It carries out the reaction Thiol-dependent hydrolysis of ester, thioester, amide, peptide and isopeptide bonds formed by the C-terminal Gly of ubiquitin (a 76-residue protein attached to proteins as an intracellular targeting signal).. Its activity is regulated as follows. Inhibited by N-ethyl-maleimide (NEM). In terms of biological role, deubiquitinating enzyme that functions as a negative regulator of the innate immune system. Has peptidase activity towards 'Lys-48'- and 'Lys-63'-linked polyubiquitin chains. Can also cleave 'Lys-11'-linked ubiquitin chains (in vitro). Acts via TRAF3 deubiquitination and subsequent suppression of type I interferon (IFN) production. Controls neuroectodermal differentiation through cleaving 'Lys-48'-linked ubiquitin chains to counteract degradation of select chromatin regulators such as ARID1A, HDAC2 and HCF1. Acts as a positive regulator of mTORC1 and mTORC2 signaling following phosphorylation by MTOR: acts by mediating deubiquitination of BTRC, leading to its stability. In Homo sapiens (Human), this protein is OTU domain-containing protein 5.